The sequence spans 194 residues: Ion-translocating oxidoreductase complex subunit A (194 aa).

6 helical membrane passes run 4–24, 39–59, 72–92, 102–122, 135–155, and 172–192; these read LVLILVGAILVNNFVLVQFLG, IGLALATTFVLTLAAMCSYLL, LRTIGFILVIAVVVQFTEMLV, VLGIFLPLITTNCIVLGVALL, GINGFGAGLGFSLVLVLFAAM, and AIGLITAGLMSLAFMGFSGLI.

Belongs to the NqrDE/RnfAE family. As to quaternary structure, the complex is composed of six subunits: RnfA, RnfB, RnfC, RnfD, RnfE and RnfG.

The protein resides in the cell inner membrane. In terms of biological role, part of a membrane-bound complex that couples electron transfer with translocation of ions across the membrane. This is Ion-translocating oxidoreductase complex subunit A from Azotobacter vinelandii (strain DJ / ATCC BAA-1303).